Consider the following 775-residue polypeptide: Subtilisin-like protease SBT3.8 (775 aa).

The first 26 residues, 1 to 26 (MKSCRTLIFVAIILNGLSTFVAHAGA), serve as a signal peptide directing secretion. Residues 27–109 (ESKVHIVYLG…VTPDSFYQLD (83 aa)) constitute a propeptide, activation peptide. In terms of domain architecture, Inhibitor I9 spans 30–108 (VHIVYLGEKQ…HVTPDSFYQL (79 aa)). Positions 113-622 (TWDYLGLSVA…GGLVNPEKAA (510 aa)) constitute a Peptidase S8 domain. Residue asparagine 129 is glycosylated (N-linked (GlcNAc...) asparagine). Catalysis depends on aspartate 143, which acts as the Charge relay system. Residues asparagine 174 and asparagine 202 are each glycosylated (N-linked (GlcNAc...) asparagine). The active-site Charge relay system is histidine 218. A PA domain is found at 384-476 (SLVYPENPGN…VDYELGTDIL (93 aa)). Asparagine 395, asparagine 410, and asparagine 538 each carry an N-linked (GlcNAc...) asparagine glycan. Residue serine 553 is the Charge relay system of the active site. N-linked (GlcNAc...) asparagine glycans are attached at residues asparagine 645, asparagine 721, and asparagine 756.

The protein belongs to the peptidase S8 family.

Its subcellular location is the secreted. The sequence is that of Subtilisin-like protease SBT3.8 from Arabidopsis thaliana (Mouse-ear cress).